Here is a 339-residue protein sequence, read N- to C-terminus: Serpentine receptor class r-10 (339 aa).

Residues 1–11 (MSGELWITLVD) are Extracellular-facing. The chain crosses the membrane as a helical span at residues 12–32 (TADIVGVTLTFCVNIVLLGLL). The Cytoplasmic segment spans residues 33–42 (KTRGKNLGTY). A helical transmembrane segment spans residues 43 to 63 (KYLMAFFSVFSIFYAIIEFIL). Over 64–92 (RPIMHIENTTFFLISRKRFNYSTKLGKIN) the chain is Extracellular. 2 N-linked (GlcNAc...) asparagine glycosylation sites follow: Asn71 and Asn83. A helical transmembrane segment spans residues 93–113 (SAFYCACFATSFVVSGVHFVY). The Cytoplasmic segment spans residues 114–131 (RYFATCKPNLLRLFNLPT). The helical transmembrane segment at 132 to 152 (LLLWPLGCSVPVTMWASVSYF) threads the bilayer. Residues 153-201 (LYPDTEYTEAAVTNVLNNHYNWIKKENVSYIAYVYYQYENGVRHIYLKN) are Extracellular-facing. N-linked (GlcNAc...) asparagine glycosylation occurs at Asn179. A helical membrane pass occupies residues 202–222 (LLGCFVHYFVMSMTFVVMFYC). Over 223–254 (GYATWKTMNEHKDVSDRTRALQKQLFKALVLQ) the chain is Cytoplasmic. A helical membrane pass occupies residues 255–275 (TLIPTIFMYAPTGVMFIAPFF). Over 276–284 (DVNLNANAN) the chain is Extracellular. Residues 285–305 (FIVFCSFLYPGLDPLILILII) form a helical membrane-spanning segment. At 306–339 (RDFRRTIFNFLCGKKNSVDESRSTTRANLSQVPT) the chain is on the cytoplasmic side.

It belongs to the nematode receptor-like protein str family. Interacts with odr-4. In terms of tissue distribution, strongly expressed in the sensory cilia of AWA olfactory neurons, and at low levels in the CEP neurons.

The protein resides in the cell projection. Its subcellular location is the cilium membrane. In terms of biological role, an odorant receptor which affects chemotaxis to the volatile odorant diacetyl. Specifies AWA neuronal cell fate via the odr-7 pathway. The chain is Serpentine receptor class r-10 from Caenorhabditis elegans.